The following is a 150-amino-acid chain: Aspartate 1-decarboxylase (150 aa).

Ser25 functions as the Schiff-base intermediate with substrate; via pyruvic acid in the catalytic mechanism. At Ser25 the chain carries Pyruvic acid (Ser). Position 57 (Thr57) interacts with substrate. The Proton donor role is filled by Tyr58. 73-75 provides a ligand contact to substrate; that stretch reads GAA.

It belongs to the PanD family. As to quaternary structure, heterooctamer of four alpha and four beta subunits. Pyruvate serves as cofactor. Is synthesized initially as an inactive proenzyme, which is activated by self-cleavage at a specific serine bond to produce a beta-subunit with a hydroxyl group at its C-terminus and an alpha-subunit with a pyruvoyl group at its N-terminus.

It localises to the cytoplasm. The enzyme catalyses L-aspartate + H(+) = beta-alanine + CO2. It participates in cofactor biosynthesis; (R)-pantothenate biosynthesis; beta-alanine from L-aspartate: step 1/1. Catalyzes the pyruvoyl-dependent decarboxylation of aspartate to produce beta-alanine. In Kocuria rhizophila (strain ATCC 9341 / DSM 348 / NBRC 103217 / DC2201), this protein is Aspartate 1-decarboxylase.